Consider the following 295-residue polypeptide: Inorganic pyrophosphatase 1 (295 aa).

Catalysis depends on Asp-19, which acts as the Nucleophile. Mg(2+) contacts are provided by Asp-19 and Asp-21. Asp-21 (proton donor) is an active-site residue. Positions 30 and 105 each coordinate substrate. Asp-190 lines the Mg(2+) pocket.

It belongs to the HAD-like hydrolase superfamily. As to quaternary structure, tetramer. Mg(2+) is required as a cofactor. It depends on Fe(2+) as a cofactor. Requires Ni(2+) as cofactor. Co(2+) serves as cofactor. The cofactor is Mn(2+).

It carries out the reaction diphosphate + H2O = 2 phosphate + H(+). Its function is as follows. Catalyzes the specific cleavage of pyrophosphate. This Arabidopsis thaliana (Mouse-ear cress) protein is Inorganic pyrophosphatase 1 (PS2).